Reading from the N-terminus, the 499-residue chain is NAD(P)H-quinone oxidoreductase chain 4, chloroplastic (499 aa).

A run of 14 helical transmembrane segments spans residues 4 to 24 (LPWL…IPLF), 31 to 51 (MIRW…TYIF), 87 to 107 (IGLI…AWPV), 113 to 130 (LLHF…GLFA), 134 to 154 (ILLF…LLSM), 167 to 187 (FLLY…SMGL), 211 to 231 (ILLY…FPLH), 242 to 262 (HYST…YGLI), 274 to 294 (SLFS…AALT), 305 to 325 (IAYS…SMTY), 330 to 350 (GAIL…FLVG), 386 to 406 (LALP…GVIT), 416 to 436 (IIIT…LLSM), and 462 to 482 (LFIL…PDLV).

This sequence belongs to the complex I subunit 4 family.

The protein resides in the plastid. It localises to the chloroplast thylakoid membrane. It carries out the reaction a plastoquinone + NADH + (n+1) H(+)(in) = a plastoquinol + NAD(+) + n H(+)(out). The catalysed reaction is a plastoquinone + NADPH + (n+1) H(+)(in) = a plastoquinol + NADP(+) + n H(+)(out). The sequence is that of NAD(P)H-quinone oxidoreductase chain 4, chloroplastic from Cryptomeria japonica (Japanese cedar).